The sequence spans 356 residues: Tyrosine recombinase XerS (356 aa).

Residues 16–121 enclose the Core-binding (CB) domain; sequence LMPWYVLEYY…ALSSLYKYLT (106 aa). A Tyr recombinase domain is found at 169-354; that stretch reads EFLEYVDCEY…VNDEQKNALD (186 aa). Active-site residues include R210, K234, H306, R309, and H332. Residue Y341 is the O-(3'-phospho-DNA)-tyrosine intermediate of the active site.

The protein belongs to the 'phage' integrase family. XerS subfamily.

The protein localises to the cytoplasm. Its activity is regulated as follows. FtsK is required for recombination. In terms of biological role, site-specific tyrosine recombinase, which acts by catalyzing the cutting and rejoining of the recombining DNA molecules. Essential to convert dimers of the bacterial chromosome into monomers to permit their segregation at cell division. This chain is Tyrosine recombinase XerS, found in Streptococcus mutans serotype c (strain ATCC 700610 / UA159).